The chain runs to 284 residues: Serine/threonine-protein phosphatase Pgam5, mitochondrial (284 aa).

A helical transmembrane segment spans residues 8-24; that stretch reads LGVPTATLAVGTLLLGD.

This sequence belongs to the phosphoglycerate mutase family. BPG-dependent PGAM subfamily. As to quaternary structure, interacts with skn-1 isoforms a and c.

The protein localises to the mitochondrion outer membrane. The enzyme catalyses O-phospho-L-seryl-[protein] + H2O = L-seryl-[protein] + phosphate. It carries out the reaction O-phospho-L-threonyl-[protein] + H2O = L-threonyl-[protein] + phosphate. Displays phosphatase activity for serine/threonine residues. Has apparently no phosphoglycerate mutase activity. This is Serine/threonine-protein phosphatase Pgam5, mitochondrial (pgam-5) from Caenorhabditis elegans.